We begin with the raw amino-acid sequence, 837 residues long: Striatin-interacting protein 1 (837 aa).

Residue M1 is modified to N-acetylmethionine. Disordered stretches follow at residues 1–67 (MEPA…ESPD) and 333–423 (AASP…KGLP). Residues 18–35 (PQPPPPPPPAAAQPPPGA) are compositionally biased toward pro residues. Positions 36 to 46 (PRAAAGLLPGG) are enriched in low complexity. Residues 47-60 (KAREFNRNQRKDSE) are compositionally biased toward basic and acidic residues. A phosphoserine mark is found at S59, S335, and S339. A compositionally biased stretch (basic and acidic residues) spans 356 to 377 (KALIKQDNLDAFNERDPYKADD). Acidic residues predominate over residues 378–391 (SREEEEENDDDNSL). S788 is modified (phosphoserine). The required for STRIPAK core complex formation stretch occupies residues 796–837 (DNCLQSVLGQRVDLPEDFQMNYDLWLEREVFSKPISWEELLQ).

Belongs to the STRIP family. As to quaternary structure, part of the core of STRIPAK complexes composed of PP2A catalytic and scaffolding subunits, the striatins (PP2A regulatory subunits), the striatin-associated proteins MOB4, STRIP1 and STRIP2, PDCD10 and members of the STE20 kinases, such as STK24 and STK26. The STRIPAK complex can be extended by adapter proteins such as SLMAP:SIKE1, CTTNBP2 or CTTNBP2NL. Interacts with CDC42BPB. Interacts with CTTNBP2NL.

It is found in the cytoplasm. Plays a role in the regulation of cell morphology and cytoskeletal organization. Required in the cortical actin filament dynamics and cell shape. Part of the striatin-interacting phosphatase and kinase (STRIPAK) complexes. STRIPAK complexes have critical roles in protein (de)phosphorylation and are regulators of multiple signaling pathways including Hippo, MAPK, nuclear receptor and cytoskeleton remodeling. Different types of STRIPAK complexes are involved in a variety of biological processes such as cell growth, differentiation, apoptosis, metabolism and immune regulation. The chain is Striatin-interacting protein 1 from Homo sapiens (Human).